The chain runs to 498 residues: Actin-binding protein WASF2 (498 aa).

Disordered regions lie at residues 173–203 (KEKR…KEEW) and 240–435 (NVDA…AVSD). A compositionally biased stretch (low complexity) spans 252 to 263 (SDSASSPSPSFS). Positions 298–407 (SHPPPAPPLG…PPPGPPPPPF (110 aa)) are enriched in pro residues. One can recognise a WH2 domain in the interval 436 to 453 (ARSDLLSAIRQGFQLRRV). Ser-474 bears the Phosphoserine mark.

This sequence belongs to the SCAR/WAVE family. As to quaternary structure, binds actin and the Arp2/3 complex. Interacts with BAIAP2. Component of the WAVE2 complex composed of ABI1, CYFIP1/SRA1, NCKAP1/NAP1 (NCKAP1l/HEM1 in hematopoietic cells) and WASF2/WAVE2. Directly interacts with BRK1. Interacts with FNBP1L (via the SH3 domain). In terms of assembly, (Microbial infection) Interacts with human cytomegalovirus protein UL135. Expressed in all tissues with strongest expression in placenta, lung, and peripheral blood leukocytes, but not in skeletal muscle.

It is found in the cytoplasm. It localises to the cytoskeleton. The protein localises to the cell projection. Its subcellular location is the lamellipodium. The protein resides in the basolateral cell membrane. Its function is as follows. Downstream effector molecule involved in the transmission of signals from tyrosine kinase receptors and small GTPases to the actin cytoskeleton. Promotes formation of actin filaments. Part of the WAVE complex that regulates lamellipodia formation. The WAVE complex regulates actin filament reorganization via its interaction with the Arp2/3 complex. This is Actin-binding protein WASF2 from Homo sapiens (Human).